A 157-amino-acid polypeptide reads, in one-letter code: Small ribosomal subunit protein uS7 (157 aa).

Belongs to the universal ribosomal protein uS7 family. In terms of assembly, part of the 30S ribosomal subunit. Contacts proteins S9 and S11.

Its function is as follows. One of the primary rRNA binding proteins, it binds directly to 16S rRNA where it nucleates assembly of the head domain of the 30S subunit. Is located at the subunit interface close to the decoding center, probably blocks exit of the E-site tRNA. In Chlamydia trachomatis serovar L2 (strain ATCC VR-902B / DSM 19102 / 434/Bu), this protein is Small ribosomal subunit protein uS7.